Here is a 309-residue protein sequence, read N- to C-terminus: THAP domain-containing protein 7 (309 aa).

The THAP-type zinc finger occupies 1 to 93 (MPRHCSAAGC…LKEGAVPTIF (93 aa)). Residue Ser162 is modified to Phosphoserine. A disordered region spans residues 176–210 (SDLLGPLGAQADEAGCSTQPSPEQHPSPLEPQPAS). Residues 198–209 (EQHPSPLEPQPA) show a composition bias toward pro residues. Ser210 is subject to Phosphoserine. The HCFC1-binding motif (HBM) motif lies at 229–232 (EHSY).

In terms of assembly, forms homodimers. Interacts with HDAC3 and nuclear hormone receptor corepressors. Interacts via HBM with HCFC1.

Its subcellular location is the nucleus. The protein resides in the chromosome. In terms of biological role, chromatin-associated, histone tail-binding protein that represses transcription via recruitment of HDAC3 and nuclear hormone receptor corepressors. In Mus musculus (Mouse), this protein is THAP domain-containing protein 7 (Thap7).